The following is a 466-amino-acid chain: Hepatocyte nuclear factor 3-alpha (466 aa).

A DNA-binding region (fork-head) is located at residues 169–260 (AKPPYSYISL…GNMFENGCYL (92 aa)). The essential for DNA binding stretch occupies residues 251-288 (GNMFENGCYLRRQKRFKCEKQPGAGGGSGGGGSKGVPE). Residues 269 to 358 (EKQPGAGGGS…ASSSAPPISS (90 aa)) are disordered. A compositionally biased stretch (gly residues) spans 273-284 (GAGGGSGGGGSK). Residues Ser303 and Ser327 each carry the phosphoserine modification. 2 stretches are compositionally biased toward low complexity: residues 318–328 (GAPAPGPAASP) and 344–358 (ELKSPASSSAPPISS).

As to quaternary structure, binds DNA as a monomer. Interacts with FOXA2. Interacts with NKX2-1. Interacts with HDAC7. Interacts with the histone H3-H4 heterodimer. Associates with nucleosomes containing histone H2A. Interacts with AR. Interacts with NR0B2. As to expression, liver.

It is found in the nucleus. Its function is as follows. Transcription factor that is involved in embryonic development, establishment of tissue-specific gene expression and regulation of gene expression in differentiated tissues. Is thought to act as a 'pioneer' factor opening the compacted chromatin for other proteins through interactions with nucleosomal core histones and thereby replacing linker histones at target enhancer and/or promoter sites. Binds DNA with the consensus sequence 5'-[AC]A[AT]T[AG]TT[GT][AG][CT]T[CT]-3'. Proposed to play a role in translating the epigenetic signatures into cell type-specific enhancer-driven transcriptional programs. Involved in glucose homeostasis; activates the GCG promoter. Involved in the development of multiple endoderm-derived organ systems such as the liver, pancreas, lungs and prostate; FOXA1 and FOXA2 seem to have at least in part redundant roles. Modulates the transcriptional activity of nuclear hormone receptors. Is required for maximal gene activation mediated by AR in the prostate. Negatively regulates AR transactivation via competition with coactivators such as NCOA2. Is involved in ESR1-mediated transcription. Involved in regulation of apoptosis. Involved in cell cycle regulation. Originally described as a transcription activator for a number of liver genes such as AFP, albumin, tyrosine aminotransferase, PEPCK, etc. Interacts with the cis-acting regulatory regions of these genes. In Rattus norvegicus (Rat), this protein is Hepatocyte nuclear factor 3-alpha (Foxa1).